A 330-amino-acid chain; its full sequence is Type II methyltransferase M.HaeIII (330 aa).

Residues 1-327 form the SAM-dependent MTase C5-type domain; the sequence is MNLISLFSGA…KTIKSALEIC (327 aa). ATP contacts are provided by residues E29 and 50-51; that span reads DI. C71 is a catalytic residue. N260 is a binding site for ATP.

It belongs to the class I-like SAM-binding methyltransferase superfamily. C5-methyltransferase family. Monomer.

The catalysed reaction is a 2'-deoxycytidine in DNA + S-adenosyl-L-methionine = a 5-methyl-2'-deoxycytidine in DNA + S-adenosyl-L-homocysteine + H(+). Its function is as follows. A methylase, recognizes the double-stranded sequence 5'-GGCC-3', methylates C-3 on both strands, and protects the DNA from cleavage by the HaeIII endonuclease. This chain is Type II methyltransferase M.HaeIII (haeIIIM), found in Haemophilus aegyptius.